Consider the following 250-residue polypeptide: Hydroxyethylthiazole kinase (250 aa).

Position 39 (M39) interacts with substrate. Residues R114 and T159 each coordinate ATP. A substrate-binding site is contributed by G186.

The protein belongs to the Thz kinase family. Mg(2+) is required as a cofactor.

The enzyme catalyses 5-(2-hydroxyethyl)-4-methylthiazole + ATP = 4-methyl-5-(2-phosphooxyethyl)-thiazole + ADP + H(+). It functions in the pathway cofactor biosynthesis; thiamine diphosphate biosynthesis; 4-methyl-5-(2-phosphoethyl)-thiazole from 5-(2-hydroxyethyl)-4-methylthiazole: step 1/1. Its function is as follows. Catalyzes the phosphorylation of the hydroxyl group of 4-methyl-5-beta-hydroxyethylthiazole (THZ). The protein is Hydroxyethylthiazole kinase of Lactococcus lactis subsp. cremoris (strain MG1363).